Here is a 456-residue protein sequence, read N- to C-terminus: MLNNAMSVVILAAGKGTRMYSDLPKVLHTLAGKAMVQHVIDAANELGAAHVHLVYGHGGDLLKQALKDDNLNWVLQAEQLGTGHAMQQAAPFFADDEDILMLYGDVPLISVETLQRLRDAKPQGGIGLLTVKLDDPTGYGRITRENGKVTGIVEHKDATDELRQIQEINTGILIANGADMKRWLAKLTNNNAQGEYYITDIIALAYQEGREIVAVHPQRLSEVEGVNNRLQLSRLERVYQSEQAEKLLLAGVMLRDPARFDLRGTLTHGRDVEIDTNVIIEGNVTLGHRVKIGTGCVIKNSVIGDDCEISPYTVVEDANLAAACTIGPFARLRPGAELLEGAHVGNFVEMKKARLGKGSKAGHLTYLGDAEIGDNVNIGAGTITCNYDGANKFKTIIGDDVFVGSDTQLVAPVTVGKGATIAAGTTVTRNVGENALAISRVPQTQKEGWRRPVKKK.

The interval 1 to 229 (MLNNAMSVVI…LSEVEGVNNR (229 aa)) is pyrophosphorylase. Residues 11-14 (LAAG), lysine 25, glutamine 76, 81-82 (GT), 103-105 (YGD), glycine 140, glutamate 154, asparagine 169, and asparagine 227 each bind UDP-N-acetyl-alpha-D-glucosamine. A Mg(2+)-binding site is contributed by aspartate 105. Asparagine 227 contributes to the Mg(2+) binding site. Positions 230 to 250 (LQLSRLERVYQSEQAEKLLLA) are linker. The interval 251-456 (GVMLRDPARF…EGWRRPVKKK (206 aa)) is N-acetyltransferase. Residues arginine 333 and lysine 351 each coordinate UDP-N-acetyl-alpha-D-glucosamine. The active-site Proton acceptor is histidine 363. Tyrosine 366 and asparagine 377 together coordinate UDP-N-acetyl-alpha-D-glucosamine. Acetyl-CoA contacts are provided by residues alanine 380, 386 to 387 (NY), serine 405, alanine 423, and arginine 440.

This sequence in the N-terminal section; belongs to the N-acetylglucosamine-1-phosphate uridyltransferase family. It in the C-terminal section; belongs to the transferase hexapeptide repeat family. In terms of assembly, homotrimer. The cofactor is Mg(2+).

It is found in the cytoplasm. It carries out the reaction alpha-D-glucosamine 1-phosphate + acetyl-CoA = N-acetyl-alpha-D-glucosamine 1-phosphate + CoA + H(+). It catalyses the reaction N-acetyl-alpha-D-glucosamine 1-phosphate + UTP + H(+) = UDP-N-acetyl-alpha-D-glucosamine + diphosphate. The protein operates within nucleotide-sugar biosynthesis; UDP-N-acetyl-alpha-D-glucosamine biosynthesis; N-acetyl-alpha-D-glucosamine 1-phosphate from alpha-D-glucosamine 6-phosphate (route II): step 2/2. It participates in nucleotide-sugar biosynthesis; UDP-N-acetyl-alpha-D-glucosamine biosynthesis; UDP-N-acetyl-alpha-D-glucosamine from N-acetyl-alpha-D-glucosamine 1-phosphate: step 1/1. Its pathway is bacterial outer membrane biogenesis; LPS lipid A biosynthesis. In terms of biological role, catalyzes the last two sequential reactions in the de novo biosynthetic pathway for UDP-N-acetylglucosamine (UDP-GlcNAc). The C-terminal domain catalyzes the transfer of acetyl group from acetyl coenzyme A to glucosamine-1-phosphate (GlcN-1-P) to produce N-acetylglucosamine-1-phosphate (GlcNAc-1-P), which is converted into UDP-GlcNAc by the transfer of uridine 5-monophosphate (from uridine 5-triphosphate), a reaction catalyzed by the N-terminal domain. In Escherichia coli (strain 55989 / EAEC), this protein is Bifunctional protein GlmU.